The chain runs to 226 residues: MAVTFYDLSSEAGLEKLDEYLLSRSYISGYQASKDDLAVHAALAKPPSSKYVNVSRWYNHVEALLRISGVSAEGCGVTVEGSSVATPPVADTKASAAEDDDDDDVDLFGEETEEEKKASEERAAAVKASGKKKESGKSSVLLDVKPWDDETDMTKLEEAVRSIKMDGLLWGASKLVAVGYGIKKLQIMLTIVDDLVSVDDLVEDYLTAEPANEYIQSCDIVAFNKI.

Positions 82-131 (SSVATPPVADTKASAAEDDDDDDVDLFGEETEEEKKASEERAAAVKASGK) are disordered. Over residues 97 to 113 (AEDDDDDDVDLFGEETE) the composition is skewed to acidic residues. Residues 114–124 (EEKKASEERAA) show a composition bias toward basic and acidic residues.

It belongs to the EF-1-beta/EF-1-delta family. EF-1 is composed of 4 subunits: alpha, beta (1B-alpha=beta'), delta (1B-beta), and gamma (1B-gamma).

Functionally, EF-1-beta and EF-1-beta' stimulate the exchange of GDP bound to EF-1-alpha to GTP. The protein is Elongation factor 1-delta of Spuriopimpinella brachycarpa (Chamnamul).